The following is a 100-amino-acid chain: Aspartyl/glutamyl-tRNA(Asn/Gln) amidotransferase subunit C (100 aa).

It belongs to the GatC family. As to quaternary structure, heterotrimer of A, B and C subunits.

It catalyses the reaction L-glutamyl-tRNA(Gln) + L-glutamine + ATP + H2O = L-glutaminyl-tRNA(Gln) + L-glutamate + ADP + phosphate + H(+). The enzyme catalyses L-aspartyl-tRNA(Asn) + L-glutamine + ATP + H2O = L-asparaginyl-tRNA(Asn) + L-glutamate + ADP + phosphate + 2 H(+). Allows the formation of correctly charged Asn-tRNA(Asn) or Gln-tRNA(Gln) through the transamidation of misacylated Asp-tRNA(Asn) or Glu-tRNA(Gln) in organisms which lack either or both of asparaginyl-tRNA or glutaminyl-tRNA synthetases. The reaction takes place in the presence of glutamine and ATP through an activated phospho-Asp-tRNA(Asn) or phospho-Glu-tRNA(Gln). The protein is Aspartyl/glutamyl-tRNA(Asn/Gln) amidotransferase subunit C of Rickettsia canadensis (strain McKiel).